The primary structure comprises 79 residues: Gas vesicle protein A2 (79 aa).

The alpha helix 1 stretch occupies residues 9–19; it reads LAEVLDRVLDK. The tract at residues 23 to 31 is beta-strand 1; it reads VDVWARISL. The segment at 32 to 34 is beta turn; it reads VGI. The tract at residues 35–43 is beta-strand 2; it reads EILTVEARV. Residues 48–67 form an alpha helix 2 region; sequence VDTFLHYAEEIAKIEQAELT.

Belongs to the gas vesicle GvpA family. As to quaternary structure, the gas vesicle shell is 2 nm thick and consists of a single layer of this protein. It forms helical ribs nearly perpendicular to the long axis of the vesicle.

Its subcellular location is the gas vesicle shell. Gas vesicles are hollow, gas filled proteinaceous nanostructures found in several microbial planktonic microorganisms. They allow positioning of halobacteria at the optimal depth for growth in the poorly aerated shallow brine pools of their habitat. GvpA forms the gas vesicle shell. This protein can replace the p-gvpA gene in the p-vac locus and increases the critical collapse pressure (CCP) of hybrid gas vesicles from 0.66 MPa to 0.90 MPa. In stationary phase gas vesicles about 30 times more GvpA1 is found than GvpA2. Functionally, expression of 2 c-vac DNA fragments containing 2 divergently transcribed regions (gvpE-gvpF-gvpG-gvpH-gvpI-gvpJ-gvpK-gvpL-gvpM and gvpA-gvpC-gvpN-gvpO) allows H.volcanii to produce gas vesicles. All site-directed mutagenesis is tested in H.volcanii. The sequence is that of Gas vesicle protein A2 from Halobacterium salinarum (strain ATCC 700922 / JCM 11081 / NRC-1) (Halobacterium halobium).